Reading from the N-terminus, the 215-residue chain is Small ribosomal subunit protein uS5 (215 aa).

The span at 1–12 (MSGTQRRGGGAG) shows a compositional bias: gly residues. Residues 1-31 (MSGTQRRGGGAGGERRGRDNRRGQNDRNRNQ) are disordered. Residues 13 to 31 (GERRGRDNRRGQNDRNRNQ) are compositionally biased toward basic and acidic residues. The region spanning 34–97 (YLERVVAINR…EEAKKHFFKV (64 aa)) is the S5 DRBM domain.

It belongs to the universal ribosomal protein uS5 family. Part of the 30S ribosomal subunit. Contacts proteins S4 and S8.

Functionally, with S4 and S12 plays an important role in translational accuracy. Located at the back of the 30S subunit body where it stabilizes the conformation of the head with respect to the body. This is Small ribosomal subunit protein uS5 from Cutibacterium acnes (strain DSM 16379 / KPA171202) (Propionibacterium acnes).